A 424-amino-acid polypeptide reads, in one-letter code: Glutamyl-tRNA reductase (424 aa).

Substrate-binding positions include Thr49 to Arg52, Ser105, Glu110 to Gln112, and Gln116. The active-site Nucleophile is the Cys50. Gly185–Ala190 lines the NADP(+) pocket.

Belongs to the glutamyl-tRNA reductase family. In terms of assembly, homodimer.

The catalysed reaction is (S)-4-amino-5-oxopentanoate + tRNA(Glu) + NADP(+) = L-glutamyl-tRNA(Glu) + NADPH + H(+). It functions in the pathway porphyrin-containing compound metabolism; protoporphyrin-IX biosynthesis; 5-aminolevulinate from L-glutamyl-tRNA(Glu): step 1/2. Its function is as follows. Catalyzes the NADPH-dependent reduction of glutamyl-tRNA(Glu) to glutamate 1-semialdehyde (GSA). This Legionella pneumophila (strain Paris) protein is Glutamyl-tRNA reductase.